The following is a 130-amino-acid chain: Cytochrome b-c1 complex subunit 7 (130 aa).

This sequence belongs to the UQCRB/QCR7 family. In terms of assembly, component of the ubiquinol-cytochrome c oxidoreductase (cytochrome b-c1 complex, complex III, CIII), a multisubunit enzyme composed of 3 respiratory subunits cytochrome b, cytochrome c1 and Rieske protein, 2 core protein subunits, and additional low-molecular weight protein subunits. The complex exists as an obligatory dimer and forms supercomplexes (SCs) in the inner mitochondrial membrane with cytochrome c oxidase (complex IV, CIV).

It localises to the mitochondrion inner membrane. Component of the ubiquinol-cytochrome c oxidoreductase, a multisubunit transmembrane complex that is part of the mitochondrial electron transport chain which drives oxidative phosphorylation. The respiratory chain contains 3 multisubunit complexes succinate dehydrogenase (complex II, CII), ubiquinol-cytochrome c oxidoreductase (cytochrome b-c1 complex, complex III, CIII) and cytochrome c oxidase (complex IV, CIV), that cooperate to transfer electrons derived from NADH and succinate to molecular oxygen, creating an electrochemical gradient over the inner membrane that drives transmembrane transport and the ATP synthase. The cytochrome b-c1 complex catalyzes electron transfer from ubiquinol to cytochrome c, linking this redox reaction to translocation of protons across the mitochondrial inner membrane, with protons being carried across the membrane as hydrogens on the quinol. In the process called Q cycle, 2 protons are consumed from the matrix, 4 protons are released into the intermembrane space and 2 electrons are passed to cytochrome c. The protein is Cytochrome b-c1 complex subunit 7 (UBCRBP) of Echinococcus multilocularis (Fox tapeworm).